We begin with the raw amino-acid sequence, 634 residues long: Dynein axonemal assembly factor 1 (634 aa).

The interval 1-80 (MHPEVSEPPV…SRDDREDRGP (80 aa)) is disordered. The segment covering 22–42 (AGDHGDAGPGIRKEEISETKE) has biased composition (basic and acidic residues). Residues 48-62 (CTTSCPSQQQPSGDN) show a composition bias toward polar residues. Basic and acidic residues predominate over residues 70–80 (HSRDDREDRGP). LRR repeat units follow at residues 101-123 (ALND…EEYT), 124-145 (GLRC…QAQS), 146-167 (ELRC…EPLQ), 168-189 (KLDA…SCLP), 190-211 (VLNT…EHLR), and 215-236 (RLCV…SVLE). The 40-residue stretch at 249–288 (NPVTKHIPNYRRTVTVRLKHLTYLDDRPVFPKDRACAEAW) folds into the LRRCT domain. Positions 326–336 (EERKKARDRGE) are enriched in basic and acidic residues. A disordered region spans residues 326–358 (EERKKARDRGETPLPDSEGSIPTSPEAEEKQPM). Residue Ser349 is modified to Phosphoserine. Phosphothreonine is present on Thr462. Phosphoserine occurs at positions 465 and 488. Disordered stretches follow at residues 481–505 (ISSL…ATPT) and 559–634 (ELND…FGLD).

This sequence belongs to the DNAAF1 family.

The protein localises to the cell projection. Its subcellular location is the cilium. Its function is as follows. Cilium-specific protein required for the stability of the ciliary architecture. Plays a role in cytoplasmic preassembly of dynein arms. Involved in regulation of microtubule-based cilia and actin-based brush border microvilli. This is Dynein axonemal assembly factor 1 (Dnaaf1) from Mus musculus (Mouse).